A 324-amino-acid chain; its full sequence is Zinc transporter ZIP1 (324 aa).

The Extracellular segment spans residues 1–30 (MGPWGEPELLVWRPEAAASEAPVPMGLEVK). The chain crosses the membrane as a helical span at residues 31 to 51 (LGALVLLLVLTLICSLVPVCV). The Cytoplasmic portion of the chain corresponds to 52–68 (LRRPGANPEASASRQKA). A helical transmembrane segment spans residues 69 to 89 (LSLVSCFAGGVFLATCLLDLL). The Extracellular segment spans residues 90-104 (PDYLGAIDEALAALH). A helical transmembrane segment spans residues 105 to 125 (VTLQFPLQEFILAMGFFLVLV). Residues 126 to 179 (MEQITLAYKEQSGPPPREETRALLGTVNGGPQHWHDGLGVPQAGGASSAPSALR) are Cytoplasmic-facing. A helical membrane pass occupies residues 180-200 (ACVLVFSLALHSVFEGLAVGL). Topologically, residues 201 to 206 (QRDQAR) are extracellular. Residues 207-227 (AMELCLALLLHKGILAVSLSL) form a helical membrane-spanning segment. At 228–237 (RLLQSHLRAQ) the chain is on the cytoplasmic side. A helical membrane pass occupies residues 238–258 (VVAGCGILFSCMTPLGIGLGT). Over 259–272 (ALAESAGPLHQLAQ) the chain is Extracellular. The chain crosses the membrane as a helical span at residues 273 to 293 (SVLEGMAAGTFLYITFLEILP). At 294–303 (QELATSEQRI) the chain is on the cytoplasmic side. A helical membrane pass occupies residues 304–324 (LKVILLLAGFALLTGLLFIQI).

Belongs to the ZIP transporter (TC 2.A.5) family.

The protein localises to the cell membrane. It is found in the endoplasmic reticulum membrane. The enzyme catalyses Zn(2+)(in) = Zn(2+)(out). Functionally, transporter for the divalent cation Zn(2+). Mediates the influx of Zn(2+) into cells from extracellular space. The chain is Zinc transporter ZIP1 (SLC39A1) from Bos taurus (Bovine).